A 211-amino-acid polypeptide reads, in one-letter code: Protein G12 (211 aa).

The first 19 residues, 1–19 (MKIAAFVVACLVATSAVSC), serve as a signal peptide directing secretion.

The protein is Protein G12 of Anopheles gambiae (African malaria mosquito).